Reading from the N-terminus, the 614-residue chain is ATP-dependent zinc metalloprotease FtsH (614 aa).

The Stromal portion of the chain corresponds to 1 to 7 (MKKQWKK). A helical membrane pass occupies residues 8-28 (IVLFVLPVIITLITLSSFLFY). At 29–116 (NQDVVHNWSS…AHPSSSNVNL (88 aa)) the chain is on the lumenal side. A helical transmembrane segment spans residues 117–137 (VSWLSNLLLPLILIITLFFFF). Topologically, residues 138-614 (RRGNKSSSGP…EFMRIVEERV (477 aa)) are stromal. 211–218 (GPPGTGKT) is an ATP binding site. H432 serves as a coordination point for Zn(2+). E433 is an active-site residue. Residues H436 and D510 each coordinate Zn(2+).

It in the central section; belongs to the AAA ATPase family. In the C-terminal section; belongs to the peptidase M41 family. Homohexamer. Zn(2+) is required as a cofactor.

It is found in the plastid. The protein resides in the chloroplast thylakoid membrane. Its function is as follows. Acts as a processive, ATP-dependent zinc metallopeptidase. The chain is ATP-dependent zinc metalloprotease FtsH from Cyanidium caldarium (Red alga).